We begin with the raw amino-acid sequence, 934 residues long: 3-hydroxy-3-methylglutaryl-coenzyme A reductase (934 aa).

At 1-111 the chain is on the lumenal side; the sequence is MFYHGASANQ…VLNLVRGAET (111 aa). The chain crosses the membrane as a helical span at residues 112–132; that stretch reads FDIALVTCAYIAMFYTLFNLF. Positions 113 to 280 constitute an SSD domain; sequence DIALVTCAYI…STFLSAILSL (168 aa). The Cytoplasmic portion of the chain corresponds to 133-141; it reads ARMRAVGSK. A helical transmembrane segment spans residues 142-162; it reads VWLGLSTLVSSFFAFLFALYI. Residues 163 to 168 lie on the Lumenal side of the membrane; it reads TTRVLD. Residues 169 to 189 traverse the membrane as a helical segment; that stretch reads LSIPFLSLSEGIPFFVAVVGF. Over 190–231 the chain is Cytoplasmic; that stretch reads NNKILLAEKVLQNQLNAQSSKNDAPTVLYQALREQGPLLLRD. The chain crosses the membrane as a helical span at residues 232–252; it reads HLFMITAFLGCSFYASYLDGL. Over 253-256 the chain is Lumenal; it reads KNFC. The chain crosses the membrane as a helical span at residues 257 to 277; the sequence is ILAALILAFDILTTSTFLSAI. At 278 to 334 the chain is on the cytoplasmic side; that stretch reads LSLKLEINQIHRSTLLREQLEDDGLTETTVDDVLKSNSLAGTKTFTDAPSTLVTVAK. A helical transmembrane segment spans residues 335–355; sequence VAGVSVFFGLHFYGFGSAWLS. Over 356 to 421 the chain is Lumenal; it reads DLSAGNETND…GLISTAARDK (66 aa). N-linked (GlcNAc...) asparagine glycosylation is found at asparagine 361, asparagine 364, and asparagine 382. A helical transmembrane segment spans residues 422–442; sequence YISKFILFAFAVSASINVYLL. Over 443 to 934 the chain is Cytoplasmic; sequence NVARIHTTRL…MQHNRAAAKK (492 aa). The active-site Charge relay system is the glutamate 618. 624 to 630 lines the CoA pocket; the sequence is SAMRGCK. NADP(+) is bound by residues 685–687 and 712–720; these read SRF and DAMGMNMIS. Catalysis depends on lysine 752, which acts as the Charge relay system. 781-783 is a binding site for CoA; the sequence is VLK. Aspartate 828 serves as the catalytic Charge relay system. 923-924 contacts CoA; it reads SH. The active-site Proton donor is histidine 924. 928 to 929 is a binding site for NADP(+); the sequence is NR.

This sequence belongs to the HMG-CoA reductase family.

The protein resides in the endoplasmic reticulum membrane. The enzyme catalyses (R)-mevalonate + 2 NADP(+) + CoA = (3S)-3-hydroxy-3-methylglutaryl-CoA + 2 NADPH + 2 H(+). It functions in the pathway metabolic intermediate biosynthesis; (R)-mevalonate biosynthesis; (R)-mevalonate from acetyl-CoA: step 3/3. HMG-CoA reductase; part of the first module of ergosterol biosynthesis pathway that includes the early steps of the pathway, conserved across all eukaryotes, and which results in the formation of mevalonate from acetyl-coenzyme A (acetyl-CoA). In this module, the cytosolic acetyl-CoA acetyltransferase catalyzes the formation of acetoacetyl-CoA. The hydroxymethylglutaryl-CoA synthase then condenses acetyl-CoA with acetoacetyl-CoA to form HMG-CoA. The rate-limiting step of the early module is the reduction to mevalonate by the 3-hydroxy-3-methylglutaryl-coenzyme A (HMG-CoA) reductase. The sequence is that of 3-hydroxy-3-methylglutaryl-coenzyme A reductase from Cyberlindnera jadinii (Torula yeast).